Here is a 574-residue protein sequence, read N- to C-terminus: MANPPHGGVLKDLIARDAPRRQELYAEAEKLPAIVLSDRQLCDLELILNGGFSPLEGFMNEKDYTGVVAENRLADGNLFSIPITLDVSKETIDEVGVKAGARIALRDSRDDRNLAIITVDDIYKPDKVKEANEVFGDNDEAHPAVKYLHHTAKEFYVGGKVEAIDRLEHYDYVGLRYTPAELRLHFDKLGWQKVVAFQTRNPMHRAHRELTVRAARARQANVLIHPVVGLTKPGDIDHFTRVRVYQALMPRYPNGMAVLALLPLAMRMGGPREAIWHAIIRKNHGATHFIVGRDHAGPGKNSKGVDFYGPYDAQDAVEKYRDELGIEVVPFQQMTYLPDSDEYKPKDEVAKDIKTLDISGTELRKRLRTGQEIPEWFSYPEVVKVLRESHPPRNQQGFTVFLTGYQNSGKDAIARALNVTLNQQGGRSVSLLLGETVRSELSSELGFSREDRDKNIARIAFVAAELTKAGAAAIVAPIAPFQKSRQQARETVEKYGSFFLVHVATPLDHAEKTDRRGVYAKARAGEIKGFTGVDDPYEAPENADLVVDTSKTNVRTAVHQIVLLLESQGLLTQL.

Residues 1–170 (MANPPHGGVL…VEAIDRLEHY (170 aa)) are N-terminal. The tract at residues 171–395 (DYVGLRYTPA…LRESHPPRNQ (225 aa)) is catalytic. Gln198 provides a ligand contact to sulfate. ATP-binding positions include 198 to 201 (QTRN) and 292 to 295 (GRDH). Active-site residues include Thr199, Arg200, and Asn201. Arg200 is a binding site for sulfate. Residue Ala296 coordinates sulfate. Met334 provides a ligand contact to ATP. The interval 396–574 (QGFTVFLTGY…LESQGLLTQL (179 aa)) is allosteric regulation domain; adenylyl-sulfate kinase-like. Residues 435–438 (ETVR), Arg452, 478–479 (IA), and Arg516 contribute to the 3'-phosphoadenylyl sulfate site.

This sequence in the N-terminal section; belongs to the sulfate adenylyltransferase family. The protein in the C-terminal section; belongs to the APS kinase family. Homohexamer. Dimer of trimers.

Its subcellular location is the cytoplasm. The catalysed reaction is sulfate + ATP + H(+) = adenosine 5'-phosphosulfate + diphosphate. Its pathway is sulfur metabolism; hydrogen sulfide biosynthesis; sulfite from sulfate: step 1/3. Allosterically inhibited by 3'-phosphoadenosine 5'-phosphosulfate (PAPS). In terms of biological role, catalyzes the first intracellular reaction of sulfate assimilation, forming adenosine-5'-phosphosulfate (APS) from inorganic sulfate and ATP. Plays an important role in sulfate activation as a component of the biosynthesis pathway of sulfur-containing amino acids. This is Sulfate adenylyltransferase from Phaeosphaeria nodorum (strain SN15 / ATCC MYA-4574 / FGSC 10173) (Glume blotch fungus).